We begin with the raw amino-acid sequence, 735 residues long: Translation initiation factor IF-2, chloroplastic (735 aa).

Positions 239 to 411 (RRAPIVTILG…ILLMADIENY (173 aa)) constitute a tr-type G domain. The tract at residues 248–255 (GHVDHGKT) is G1. Residue 248 to 255 (GHVDHGKT) coordinates GTP. The segment at 273-277 (GITQK) is G2. Residues 298–301 (DTPG) form a G3 region. Residues 298-302 (DTPGH) and 352-355 (NKID) contribute to the GTP site. The G4 stretch occupies residues 352 to 355 (NKID). The segment at 388 to 390 (SAS) is G5.

This sequence belongs to the TRAFAC class translation factor GTPase superfamily. Classic translation factor GTPase family. IF-2 subfamily.

It is found in the plastid. It localises to the chloroplast. Its function is as follows. One of the essential components for the initiation of protein synthesis. Protects formylmethionyl-tRNA from spontaneous hydrolysis and promotes its binding to the 30S ribosomal subunits. Also involved in the hydrolysis of GTP during the formation of the 70S ribosomal complex. The sequence is that of Translation initiation factor IF-2, chloroplastic (infB) from Guillardia theta (Cryptophyte).